Reading from the N-terminus, the 212-residue chain is dITP/XTP pyrophosphatase (212 aa).

Serine 7–lysine 12 contributes to the substrate binding site. Catalysis depends on aspartate 72, which acts as the Proton acceptor. Aspartate 72 lines the Mg(2+) pocket. Residues serine 73, phenylalanine 163–aspartate 166, lysine 187, and histidine 192–arginine 193 contribute to the substrate site. Residues glycine 164–glycine 194 are disordered. A compositionally biased stretch (basic and acidic residues) spans threonine 183–histidine 192.

It belongs to the HAM1 NTPase family. In terms of assembly, homodimer. It depends on Mg(2+) as a cofactor.

The catalysed reaction is XTP + H2O = XMP + diphosphate + H(+). It carries out the reaction dITP + H2O = dIMP + diphosphate + H(+). It catalyses the reaction ITP + H2O = IMP + diphosphate + H(+). Pyrophosphatase that catalyzes the hydrolysis of nucleoside triphosphates to their monophosphate derivatives, with a high preference for the non-canonical purine nucleotides XTP (xanthosine triphosphate), dITP (deoxyinosine triphosphate) and ITP. Seems to function as a house-cleaning enzyme that removes non-canonical purine nucleotides from the nucleotide pool, thus preventing their incorporation into DNA/RNA and avoiding chromosomal lesions. The chain is dITP/XTP pyrophosphatase from Corynebacterium urealyticum (strain ATCC 43042 / DSM 7109).